A 502-amino-acid polypeptide reads, in one-letter code: Ubiquitin-like-specific protease 1A (502 aa).

Catalysis depends on residues His393, Asp410, and Cys461.

It belongs to the peptidase C48 family.

In terms of biological role, protease that catalyzes two essential functions in the SUMO pathway: processing of full-length SUMOs to their mature forms and deconjugation of SUMO from targeted proteins. Cleaves precursors of SUM1 and SUM2, and very inefficiently of SUM3. Seems to be the only ULP1 able to cleave SUM3 precursors. Cleaves SUMO peptides better than SUMO-conjugated proteins. The chain is Ubiquitin-like-specific protease 1A (ULP1A) from Arabidopsis thaliana (Mouse-ear cress).